Reading from the N-terminus, the 183-residue chain is Large ribosomal subunit protein uL10 (183 aa).

The protein belongs to the universal ribosomal protein uL10 family. Part of the ribosomal stalk of the 50S ribosomal subunit. The N-terminus interacts with L11 and the large rRNA to form the base of the stalk. The C-terminus forms an elongated spine to which L12 dimers bind in a sequential fashion forming a multimeric L10(L12)X complex.

In terms of biological role, forms part of the ribosomal stalk, playing a central role in the interaction of the ribosome with GTP-bound translation factors. This Mesomycoplasma hyopneumoniae (strain 232) (Mycoplasma hyopneumoniae) protein is Large ribosomal subunit protein uL10.